The sequence spans 172 residues: Adenine phosphoribosyltransferase (172 aa).

This sequence belongs to the purine/pyrimidine phosphoribosyltransferase family. Homodimer.

It is found in the cytoplasm. It carries out the reaction AMP + diphosphate = 5-phospho-alpha-D-ribose 1-diphosphate + adenine. It functions in the pathway purine metabolism; AMP biosynthesis via salvage pathway; AMP from adenine: step 1/1. In terms of biological role, catalyzes a salvage reaction resulting in the formation of AMP, that is energically less costly than de novo synthesis. The polypeptide is Adenine phosphoribosyltransferase (Prochlorococcus marinus (strain MIT 9313)).